The following is a 213-amino-acid chain: Orotate phosphoribosyltransferase (213 aa).

Lys26 contacts 5-phospho-alpha-D-ribose 1-diphosphate. 34 to 35 (FF) serves as a coordination point for orotate. 5-phospho-alpha-D-ribose 1-diphosphate-binding positions include 72 to 73 (YK), Arg99, Lys100, Lys103, His105, and 124 to 132 (DDVITAGTA). The orotate site is built by Thr128 and Arg156.

It belongs to the purine/pyrimidine phosphoribosyltransferase family. PyrE subfamily. As to quaternary structure, homodimer. Mg(2+) is required as a cofactor.

The enzyme catalyses orotidine 5'-phosphate + diphosphate = orotate + 5-phospho-alpha-D-ribose 1-diphosphate. Its pathway is pyrimidine metabolism; UMP biosynthesis via de novo pathway; UMP from orotate: step 1/2. In terms of biological role, catalyzes the transfer of a ribosyl phosphate group from 5-phosphoribose 1-diphosphate to orotate, leading to the formation of orotidine monophosphate (OMP). In Escherichia coli O139:H28 (strain E24377A / ETEC), this protein is Orotate phosphoribosyltransferase.